We begin with the raw amino-acid sequence, 207 residues long: Ribonuclease HII (207 aa).

One can recognise an RNase H type-2 domain in the interval 20–207; sequence QLFAGVDEVG…KPVKRVLGIE (188 aa). Positions 26, 27, and 118 each coordinate a divalent metal cation.

The protein belongs to the RNase HII family. The cofactor is Mn(2+). Requires Mg(2+) as cofactor.

The protein resides in the cytoplasm. The catalysed reaction is Endonucleolytic cleavage to 5'-phosphomonoester.. In terms of biological role, endonuclease that specifically degrades the RNA of RNA-DNA hybrids. The polypeptide is Ribonuclease HII (Aliivibrio fischeri (strain MJ11) (Vibrio fischeri)).